Consider the following 260-residue polypeptide: Ribonuclease HII (260 aa).

The RNase H type-2 domain maps to 71–259 (RRIAGIDEAG…VREVLKASEQ (189 aa)). A divalent metal cation is bound by residues aspartate 77, glutamate 78, and aspartate 169.

It belongs to the RNase HII family. It depends on Mn(2+) as a cofactor. The cofactor is Mg(2+).

Its subcellular location is the cytoplasm. It catalyses the reaction Endonucleolytic cleavage to 5'-phosphomonoester.. In terms of biological role, endonuclease that specifically degrades the RNA of RNA-DNA hybrids. The sequence is that of Ribonuclease HII from Geobacillus kaustophilus (strain HTA426).